A 615-amino-acid chain; its full sequence is Dihydroxy-acid dehydratase (615 aa).

Aspartate 81 provides a ligand contact to Mg(2+). Cysteine 122 serves as a coordination point for [2Fe-2S] cluster. Mg(2+)-binding residues include aspartate 123 and lysine 124. Lysine 124 is modified (N6-carboxylysine). A [2Fe-2S] cluster-binding site is contributed by cysteine 195. Glutamate 491 contributes to the Mg(2+) binding site. Catalysis depends on serine 517, which acts as the Proton acceptor.

Belongs to the IlvD/Edd family. Homodimer. It depends on [2Fe-2S] cluster as a cofactor. Mg(2+) serves as cofactor.

The catalysed reaction is (2R)-2,3-dihydroxy-3-methylbutanoate = 3-methyl-2-oxobutanoate + H2O. It carries out the reaction (2R,3R)-2,3-dihydroxy-3-methylpentanoate = (S)-3-methyl-2-oxopentanoate + H2O. Its pathway is amino-acid biosynthesis; L-isoleucine biosynthesis; L-isoleucine from 2-oxobutanoate: step 3/4. The protein operates within amino-acid biosynthesis; L-valine biosynthesis; L-valine from pyruvate: step 3/4. Its function is as follows. Functions in the biosynthesis of branched-chain amino acids. Catalyzes the dehydration of (2R,3R)-2,3-dihydroxy-3-methylpentanoate (2,3-dihydroxy-3-methylvalerate) into 2-oxo-3-methylpentanoate (2-oxo-3-methylvalerate) and of (2R)-2,3-dihydroxy-3-methylbutanoate (2,3-dihydroxyisovalerate) into 2-oxo-3-methylbutanoate (2-oxoisovalerate), the penultimate precursor to L-isoleucine and L-valine, respectively. The sequence is that of Dihydroxy-acid dehydratase from Shewanella halifaxensis (strain HAW-EB4).